We begin with the raw amino-acid sequence, 336 residues long: Porphobilinogen deaminase (336 aa).

Cys-251 is subject to S-(dipyrrolylmethanemethyl)cysteine. Phosphoserine is present on residues Ser-327 and Ser-329.

Belongs to the HMBS family. It depends on dipyrromethane as a cofactor.

It catalyses the reaction 4 porphobilinogen + H2O = hydroxymethylbilane + 4 NH4(+). It participates in porphyrin-containing compound metabolism; protoporphyrin-IX biosynthesis; coproporphyrinogen-III from 5-aminolevulinate: step 2/4. In terms of biological role, tetrapolymerization of the monopyrrole PBG into the hydroxymethylbilane pre-uroporphyrinogen in several discrete steps. This Schizosaccharomyces pombe (strain 972 / ATCC 24843) (Fission yeast) protein is Porphobilinogen deaminase (hem3).